A 567-amino-acid chain; its full sequence is Malate synthase (567 aa).

Arginine 177 functions as the Proton acceptor in the catalytic mechanism. Residue aspartate 466 is the Proton donor of the active site. Positions 565-567 match the Microbody targeting signal motif; the sequence is CKL.

The protein belongs to the malate synthase family.

Its subcellular location is the glyoxysome. The enzyme catalyses glyoxylate + acetyl-CoA + H2O = (S)-malate + CoA + H(+). It participates in carbohydrate metabolism; glyoxylate cycle; (S)-malate from isocitrate: step 2/2. In Oryza sativa subsp. japonica (Rice), this protein is Malate synthase.